The primary structure comprises 455 residues: Mycosin-4 (455 aa).

The N-terminal stretch at 1–25 (MTTSRTLRLLVVSALATLSGLGTPV) is a signal peptide. Positions 74 to 384 (SAQLADLDQV…NGTVDALAAV (311 aa)) constitute a Peptidase S8 domain. Catalysis depends on charge relay system residues Asp98, His129, and Ser329. The interval 389–417 (IPQAGTATSDPAPVAVPVPRRSTPGPSDR) is disordered. A compositionally biased stretch (low complexity) spans 394–412 (TATSDPAPVAVPVPRRSTP). A helical membrane pass occupies residues 432-452 (LALMATLATASRRLRPGRNGI).

This sequence belongs to the peptidase S8 family.

The protein localises to the cell membrane. This Mycobacterium tuberculosis (strain ATCC 25618 / H37Rv) protein is Mycosin-4.